We begin with the raw amino-acid sequence, 674 residues long: tRNA-guanine(15) transglycosylase (674 aa).

The active-site Nucleophile is the aspartate 90. Positions 125 and 192 each coordinate substrate. 3 residues coordinate Zn(2+): cysteine 275, cysteine 277, and cysteine 280. One can recognise a PUA domain in the interval 596–671 (HNRVVVSEDS…QAIKTRKWKK (76 aa)).

Belongs to the archaeosine tRNA-ribosyltransferase family. It depends on Zn(2+) as a cofactor.

The enzyme catalyses guanosine(15) in tRNA + 7-cyano-7-deazaguanine = 7-cyano-7-carbaguanosine(15) in tRNA + guanine. Its pathway is tRNA modification; archaeosine-tRNA biosynthesis. Functionally, exchanges the guanine residue with 7-cyano-7-deazaguanine (preQ0) at position 15 in the dihydrouridine loop (D-loop) of archaeal tRNAs. This chain is tRNA-guanine(15) transglycosylase, found in Methanosphaera stadtmanae (strain ATCC 43021 / DSM 3091 / JCM 11832 / MCB-3).